Here is a 147-residue protein sequence, read N- to C-terminus: Methylated-DNA--protein-cysteine methyltransferase (147 aa).

Cys112 functions as the Nucleophile; methyl group acceptor in the catalytic mechanism.

Belongs to the MGMT family.

Its subcellular location is the cytoplasm. The catalysed reaction is a 6-O-methyl-2'-deoxyguanosine in DNA + L-cysteinyl-[protein] = S-methyl-L-cysteinyl-[protein] + a 2'-deoxyguanosine in DNA. It carries out the reaction a 4-O-methyl-thymidine in DNA + L-cysteinyl-[protein] = a thymidine in DNA + S-methyl-L-cysteinyl-[protein]. In terms of biological role, involved in the cellular defense against the biological effects of O6-methylguanine (O6-MeG) and O4-methylthymine (O4-MeT) in DNA. Repairs the methylated nucleobase in DNA by stoichiometrically transferring the methyl group to a cysteine residue in the enzyme. This is a suicide reaction: the enzyme is irreversibly inactivated. In Archaeoglobus fulgidus (strain ATCC 49558 / DSM 4304 / JCM 9628 / NBRC 100126 / VC-16), this protein is Methylated-DNA--protein-cysteine methyltransferase.